Here is a 97-residue protein sequence, read N- to C-terminus: Large ribosomal subunit protein uL23 (97 aa).

The protein belongs to the universal ribosomal protein uL23 family. Part of the 50S ribosomal subunit. Contacts protein L29, and trigger factor when it is bound to the ribosome.

One of the early assembly proteins it binds 23S rRNA. One of the proteins that surrounds the polypeptide exit tunnel on the outside of the ribosome. Forms the main docking site for trigger factor binding to the ribosome. The chain is Large ribosomal subunit protein uL23 from Chelativorans sp. (strain BNC1).